The sequence spans 487 residues: Protein nucleotidyltransferase YdiU (487 aa).

The ATP site is built by Gly-92, Arg-95, Lys-106, Asp-118, Gly-119, Arg-169, and Arg-176. Catalysis depends on Asp-253, which acts as the Proton acceptor. Mg(2+)-binding residues include Asn-254 and Asp-263. Asp-263 is a binding site for ATP.

It belongs to the SELO family. It depends on Mg(2+) as a cofactor. The cofactor is Mn(2+).

It carries out the reaction L-seryl-[protein] + ATP = 3-O-(5'-adenylyl)-L-seryl-[protein] + diphosphate. It catalyses the reaction L-threonyl-[protein] + ATP = 3-O-(5'-adenylyl)-L-threonyl-[protein] + diphosphate. The catalysed reaction is L-tyrosyl-[protein] + ATP = O-(5'-adenylyl)-L-tyrosyl-[protein] + diphosphate. The enzyme catalyses L-histidyl-[protein] + UTP = N(tele)-(5'-uridylyl)-L-histidyl-[protein] + diphosphate. It carries out the reaction L-seryl-[protein] + UTP = O-(5'-uridylyl)-L-seryl-[protein] + diphosphate. It catalyses the reaction L-tyrosyl-[protein] + UTP = O-(5'-uridylyl)-L-tyrosyl-[protein] + diphosphate. Its function is as follows. Nucleotidyltransferase involved in the post-translational modification of proteins. It can catalyze the addition of adenosine monophosphate (AMP) or uridine monophosphate (UMP) to a protein, resulting in modifications known as AMPylation and UMPylation. This chain is Protein nucleotidyltransferase YdiU, found in Bordetella pertussis (strain Tohama I / ATCC BAA-589 / NCTC 13251).